The following is a 507-amino-acid chain: Protoheme IX farnesyltransferase, mitochondrial (507 aa).

The span at 72-90 shows a compositional bias: low complexity; sequence STSASASTTHDSTLSSSPT. The segment at 72 to 136 is disordered; that stretch reads STSASASTTH…RGEKPLPPDA (65 aa). A compositionally biased stretch (basic residues) spans 99-111; that stretch reads KDHKIAPHRKRQA. Helical transmembrane passes span 166–186, 199–219, 248–268, 270–290, 298–318, 339–359, 392–412, and 441–461; these read LTMLVVLTAMATYALYPVPEM, PLTLLFLTIGTTFCSASANAL, AAVLFAILSGFVGTGALYFGV, PTVSGLGFANIVIYAGMYTPL, TWIGAVVGGIPPLMGWAAAAG, IGGWVMAGLLFAWQFPHFMAL, FVFIPLCLSLCAAGVTEWSFA, and GLFWASVWHLPGVMILALLHK.

It belongs to the UbiA prenyltransferase family.

It is found in the mitochondrion membrane. It catalyses the reaction heme b + (2E,6E)-farnesyl diphosphate + H2O = Fe(II)-heme o + diphosphate. Converts protoheme IX and farnesyl diphosphate to heme O. The sequence is that of Protoheme IX farnesyltransferase, mitochondrial (COX10) from Gibberella zeae (strain ATCC MYA-4620 / CBS 123657 / FGSC 9075 / NRRL 31084 / PH-1) (Wheat head blight fungus).